The following is a 303-amino-acid chain: Aspartate carbamoyltransferase catalytic subunit (303 aa).

The carbamoyl phosphate site is built by R49 and T50. K77 contributes to the L-aspartate binding site. Carbamoyl phosphate contacts are provided by R99, H126, and Q129. L-aspartate is bound by residues R159 and R211. Residues S252 and P253 each coordinate carbamoyl phosphate.

The protein belongs to the aspartate/ornithine carbamoyltransferase superfamily. ATCase family. As to quaternary structure, heterododecamer (2C3:3R2) of six catalytic PyrB chains organized as two trimers (C3), and six regulatory PyrI chains organized as three dimers (R2).

The enzyme catalyses carbamoyl phosphate + L-aspartate = N-carbamoyl-L-aspartate + phosphate + H(+). It functions in the pathway pyrimidine metabolism; UMP biosynthesis via de novo pathway; (S)-dihydroorotate from bicarbonate: step 2/3. Catalyzes the condensation of carbamoyl phosphate and aspartate to form carbamoyl aspartate and inorganic phosphate, the committed step in the de novo pyrimidine nucleotide biosynthesis pathway. This Listeria innocua serovar 6a (strain ATCC BAA-680 / CLIP 11262) protein is Aspartate carbamoyltransferase catalytic subunit.